The chain runs to 68 residues: uncharacterized protein (68 aa).

Positions 1–68 are disordered; it reads METIIRRFSP…GNSKNIKTKK (68 aa). Residues 9-34 show a composition bias toward basic and acidic residues; the sequence is SPKEKEKEKEKEEKDEKSKDKKEPIK. The segment covering 42–51 has biased composition (acidic residues); sequence DEEEEEDEQE.

This is an uncharacterized protein from Dictyostelium discoideum (Social amoeba).